A 279-amino-acid chain; its full sequence is Protease HtpX homolog (279 aa).

2 helical membrane-spanning segments follow: residues threonine 6–glycine 26 and glycine 28–serine 48. A Zn(2+)-binding site is contributed by histidine 127. Glutamate 128 is an active-site residue. Histidine 131 is a Zn(2+) binding site. The next 2 helical transmembrane spans lie at isoleucine 137–alanine 157 and leucine 177–isoleucine 197. Residue glutamate 202 coordinates Zn(2+).

The protein belongs to the peptidase M48B family. It depends on Zn(2+) as a cofactor.

Its subcellular location is the cell inner membrane. In Syntrophotalea carbinolica (strain DSM 2380 / NBRC 103641 / GraBd1) (Pelobacter carbinolicus), this protein is Protease HtpX homolog.